The sequence spans 490 residues: Myocilin (490 aa).

The first 18 residues, 1–18, serve as a signal peptide directing secretion; it reads MPAVQLLLLACLLGGVGA. Positions 51–170 form a coiled coil; the sequence is GQAMLAIQEL…QEVASLRRGQ (120 aa). Residues 152-186 are disordered; sequence LARRLESSSQEVASLRRGQCPQAHSSSQDVPSGSR. Over residues 173 to 182 the composition is skewed to polar residues; that stretch reads QAHSSSQDVP. Residues 230–489 enclose the Olfactomedin-like domain; it reads GCGELVWVGE…MVSYDIKLSR (260 aa). An intrachain disulfide couples cysteine 231 to cysteine 419. Ca(2+)-binding residues include aspartate 366, asparagine 414, alanine 415, isoleucine 463, and aspartate 464. Residues 488–490 carry the Microbody targeting signal motif; sequence SRL.

Homodimer (via N-terminus). Can also form higher oligomers. Interacts with OLFM3, FN1, NRCAM, GLDN and NFASC. Interacts (via N-terminus) with MYL2. Interacts with SFRP1, FRZB, FZD7, FZD10, FZD1 and WIF1; regulates Wnt signaling. Interacts with SNTA1; regulates muscle hypertrophy. Interacts with ERBB2 and ERBB3; activates ERBB2-ERBB3 signaling pathway. Interacts with SNCG; affects its secretion and its aggregation. Palmitoylated. In terms of processing, undergoes a calcium-dependent proteolytic cleavage at Gln-212 by CAPN2 in the endoplasmic reticulum. The result is the production of two fragments, one of 35 kDa containing the C-terminal olfactomedin-like domain, and another of 20 kDa containing the N-terminal leucine zipper-like domain. Post-translationally, glycosylated. As to expression, the myocilin 35 kDa fragment is detected in iris and ciliary body.

The protein resides in the secreted. It is found in the golgi apparatus. The protein localises to the cytoplasmic vesicle. It localises to the extracellular space. Its subcellular location is the extracellular matrix. The protein resides in the extracellular exosome. It is found in the mitochondrion. The protein localises to the mitochondrion intermembrane space. It localises to the mitochondrion inner membrane. Its subcellular location is the mitochondrion outer membrane. The protein resides in the rough endoplasmic reticulum. It is found in the cell projection. The protein localises to the cilium. It localises to the endoplasmic reticulum. Its function is as follows. Secreted glycoprotein regulating the activation of different signaling pathways in adjacent cells to control different processes including cell adhesion, cell-matrix adhesion, cytoskeleton organization and cell migration. Promotes substrate adhesion, spreading and formation of focal contacts. Negatively regulates cell-matrix adhesion and stress fiber assembly through Rho protein signal transduction. Modulates the organization of actin cytoskeleton by stimulating the formation of stress fibers through interactions with components of Wnt signaling pathways. Promotes cell migration through activation of PTK2 and the downstream phosphatidylinositol 3-kinase signaling. Plays a role in bone formation and promotes osteoblast differentiation in a dose-dependent manner through mitogen-activated protein kinase signaling. Mediates myelination in the peripheral nervous system through ERBB2/ERBB3 signaling. Plays a role as a regulator of muscle hypertrophy through the components of dystrophin-associated protein complex. Involved in positive regulation of mitochondrial depolarization. Plays a role in neurite outgrowth. May participate in the obstruction of fluid outflow in the trabecular meshwork. The protein is Myocilin (MYOC) of Bos taurus (Bovine).